The chain runs to 323 residues: G patch domain-containing protein 4 (323 aa).

Disordered stretches follow at residues 1–32, 84–110, 124–185, and 197–323; these read MSAS…GLGR, GVKV…SNRN, PGGE…SAKL, and AKYG…NKSE. Composition is skewed to basic and acidic residues over residues 9–32 and 84–94; these read SQGR…GLGR and GVKVNRTKDDD. The 47-residue stretch at 11-57 folds into the G-patch domain; the sequence is GRRFAEQQMHKHGWTEGKGLGRRENGISEAIKVKVKCDHAGVGHNSA. Residues 131–141 are compositionally biased toward low complexity; it reads KEPSSSESSDS. Residues 252–261 show a composition bias toward acidic residues; that stretch reads EREEEEEEES. Basic residues predominate over residues 281-291; it reads SKKKKSKKKHR. The span at 294 to 306 shows a compositional bias: polar residues; the sequence is SASPQEEQVTEST. The segment covering 311–323 has biased composition (basic residues); sequence KPKKKKKKKNKSE.

This Xenopus tropicalis (Western clawed frog) protein is G patch domain-containing protein 4 (gpatch4).